A 409-amino-acid polypeptide reads, in one-letter code: MDFGALPPEINSGRMYAGPGSGPLLAAAAAWDALAAELYSAAASYGSTIEGLTVAPWMGPSSITMAAAVAPYVAWISVTAGQAEQAGAQAKIAAGVYETAFAATVPPPVIEANRALLMSLVATNIFGQNTPAIAATEAHYAEMWAQDAAAMYGYAGSSATASQLAPFSEPPQTTNPSATAAQSAVVAQAAGAAASSDITAQLSQLISLLPSTLQSLATTATATSASAGWDTVLQSITTILANLTGPYSIIGLGAIPGGWWLTFGQILGLAQNAPGVAALLGPKAAAGALSPLAPLRGGYIGDITPLGGGATGGIARAIYVGSLSVPQGWAEAAPVMRAVASVLPGTGAAPALAAEAPGALFGEMALSSLAGRALAGTAVRSGAGAARVAGGSVTEDVASTTTIIVIPAD.

The protein belongs to the mycobacterial PPE family. As to quaternary structure, interacts with host Toll-like receptor 2 (TLR2).

Its subcellular location is the secreted. The protein localises to the cell wall. It is found in the cell surface. Functionally, virulence factor that modulates the production of host cytokines. The protein is PPE family protein PPE32 of Mycobacterium tuberculosis (strain CDC 1551 / Oshkosh).